The following is a 113-amino-acid chain: Large ribosomal subunit protein bL17 (113 aa).

The protein belongs to the bacterial ribosomal protein bL17 family. Part of the 50S ribosomal subunit. Contacts protein L32.

The protein is Large ribosomal subunit protein bL17 of Caldicellulosiruptor saccharolyticus (strain ATCC 43494 / DSM 8903 / Tp8T 6331).